The chain runs to 97 residues: Putative membrane protein insertion efficiency factor (97 aa).

It belongs to the UPF0161 family.

It is found in the cell membrane. Functionally, could be involved in insertion of integral membrane proteins into the membrane. This is Putative membrane protein insertion efficiency factor from Lactobacillus johnsonii (strain CNCM I-12250 / La1 / NCC 533).